Reading from the N-terminus, the 225-residue chain is Uridylate kinase (225 aa).

Position 9–10 (9–10 (GS)) interacts with ATP. Glycine 44 provides a ligand contact to UMP. Residues glycine 45 and arginine 49 each contribute to the ATP site. UMP contacts are provided by residues aspartate 66 and 114–120 (THPGHTT). 4 residues coordinate ATP: threonine 140, asparagine 141, tyrosine 146, and aspartate 149.

This sequence belongs to the UMP kinase family. Homohexamer.

The protein resides in the cytoplasm. The enzyme catalyses UMP + ATP = UDP + ADP. It participates in pyrimidine metabolism; CTP biosynthesis via de novo pathway; UDP from UMP (UMPK route): step 1/1. Inhibited by UTP. Catalyzes the reversible phosphorylation of UMP to UDP. In Thermococcus sibiricus (strain DSM 12597 / MM 739), this protein is Uridylate kinase.